Here is a 204-residue protein sequence, read N- to C-terminus: Uracil-DNA glycosylase (204 aa).

The active-site Proton acceptor is the Asp47.

This sequence belongs to the uracil-DNA glycosylase (UDG) superfamily. UNG family.

It localises to the host nucleus. It carries out the reaction Hydrolyzes single-stranded DNA or mismatched double-stranded DNA and polynucleotides, releasing free uracil.. In terms of biological role, excises uracil residues from the DNA which can arise as a result of misincorporation of dUMP residues by DNA polymerase or deamination of cytosines. Therefore may reduce deleterious uracil incorporation into the viral genome, particularly in terminally differentiated cells which lack DNA repair enzymes. The chain is Uracil-DNA glycosylase (UL2) from Bos taurus (Bovine).